The following is a 405-amino-acid chain: Envelope glycoprotein M (405 aa).

The Intravirion portion of the chain corresponds to 1 to 17 (MKSSKNDTFVYRTWVKT). A helical membrane pass occupies residues 18-38 (LVVYFVMFVMSAVVPITAMFP). Residues 39 to 76 (NLGYPCYFNALVDYGALNLTNYNLAHHLTPTLYLEPPE) lie on the Virion surface side of the membrane. The chain crosses the membrane as a helical span at residues 77–97 (MFVYITLVFIADCVAFIYYAC). Residues 98–121 (GEVALIKARKKVSGLTDLSAWVSA) lie on the Intravirion side of the membrane. A helical transmembrane segment spans residues 122 to 142 (VGSPTVLFLAILKLWSIQVFI). The Virion surface segment spans residues 143–149 (QVLSYKH). The chain crosses the membrane as a helical span at residues 150-170 (VFLSAFVYFLHFLASVLHACA). Over 171-192 (CVTRFSPVWVVKAQDNSIPQDT) the chain is Intravirion. The chain crosses the membrane as a helical span at residues 193–215 (FLWWVVFYLKPVVTNLYLGCLAL). Residues 216–245 (ETLVFSLSVFLALGNSFYFMVGDMVLGAVN) lie on the Virion surface side of the membrane. Residues 246-266 (LFLILPIFWYILTEVWLASFL) traverse the membrane as a helical segment. Position 267 (arginine 267) is a topological domain, intravirion. Residues 268-288 (HNFGFYCGMFIASIILILPLV) form a helical membrane-spanning segment. Topologically, residues 289 to 299 (RYEAVFVSAKL) are virion surface. The helical transmembrane segment at 300 to 320 (HTTVAINVAIIPILCSVAMLI) threads the bilayer. The Intravirion segment spans residues 321–405 (RICRIFKSMR…TTDSEEEIFP (85 aa)). Positions 346 to 405 (LESEPRPRPSRTPSPGRNRRRSSTSSSSSRSTRRQRPVSTQALVSSVLPMTTDSEEEIFP) are disordered. Residues 386 to 397 (QALVSSVLPMTT) are compositionally biased toward polar residues.

Belongs to the herpesviridae glycoprotein M family. As to quaternary structure, interacts (via N-terminus) with gN (via N-terminus). The gM-gN heterodimer forms the gCII complex.

Its subcellular location is the virion membrane. The protein resides in the host Golgi apparatus. It localises to the host trans-Golgi network. The protein localises to the host endosome membrane. It is found in the host nucleus inner membrane. Envelope glycoprotein important for virion assembly and egress. Plays a role in the correct incorporation of gH-gL into virion membrane. Directs the glycoprotein N (gN) to the host trans-Golgi network. This is Envelope glycoprotein M from Epstein-Barr virus (strain B95-8) (HHV-4).